Consider the following 364-residue polypeptide: Dihydroorotate dehydrogenase (quinone) (364 aa).

FMN contacts are provided by residues 61 to 65 and Ser-85; that span reads AGFDK. Lys-65 serves as a coordination point for substrate. 110–114 lines the substrate pocket; sequence NRMGF. FMN-binding residues include Asn-139 and Asn-170. A substrate-binding site is contributed by Asn-170. Ser-173 serves as the catalytic Nucleophile. Residue Asn-175 coordinates substrate. Positions 214 and 242 each coordinate FMN. 243 to 244 contacts substrate; the sequence is NT. Residues Gly-266, Gly-295, and 316-317 contribute to the FMN site; that span reads YS.

This sequence belongs to the dihydroorotate dehydrogenase family. Type 2 subfamily. Monomer. FMN serves as cofactor.

The protein resides in the cell membrane. The enzyme catalyses (S)-dihydroorotate + a quinone = orotate + a quinol. It functions in the pathway pyrimidine metabolism; UMP biosynthesis via de novo pathway; orotate from (S)-dihydroorotate (quinone route): step 1/1. Functionally, catalyzes the conversion of dihydroorotate to orotate with quinone as electron acceptor. The sequence is that of Dihydroorotate dehydrogenase (quinone) from Bradyrhizobium sp. (strain ORS 278).